The primary structure comprises 197 residues: Inosine triphosphate pyrophosphatase (197 aa).

10–15 (TGNANK) lines the ITP pocket. Glu45 provides a ligand contact to Mg(2+). ITP-binding positions include Lys58, 76-77 (DT), Lys93, 151-154 (FGWD), Lys175, and 180-181 (HR).

The protein belongs to the HAM1 NTPase family. As to quaternary structure, homodimer. Mg(2+) is required as a cofactor. It depends on Mn(2+) as a cofactor.

Its subcellular location is the cytoplasm. The protein localises to the nucleus. The catalysed reaction is ITP + H2O = IMP + diphosphate + H(+). It catalyses the reaction dITP + H2O = dIMP + diphosphate + H(+). It carries out the reaction XTP + H2O = XMP + diphosphate + H(+). The enzyme catalyses N(6)-hydroxy-dATP + H2O = N(6)-hydroxy-dAMP + diphosphate + H(+). Pyrophosphatase that hydrolyzes the non-canonical purine nucleotides inosine triphosphate (ITP), deoxyinosine triphosphate (dITP) as well as 2'-deoxy-N-6-hydroxylaminopurine triphosphate (dHAPTP) and 5-bromodeoxyuridine 5'-triphosphate (BrdUTP) to their respective monophosphate derivatives. Xanthosine 5'-triphosphate (XTP) is also a potential substrate. The enzyme does not distinguish between the deoxy- and ribose forms. Probably excludes non-canonical purines from RNA and DNA precursor pools, thus preventing their incorporation into RNA and DNA and avoiding chromosomal lesions. In Saccharomyces cerevisiae (strain ATCC 204508 / S288c) (Baker's yeast), this protein is Inosine triphosphate pyrophosphatase.